A 64-amino-acid chain; its full sequence is MATVKFKYKGEEKEVDISKIKKVWRVGKMISFTYDEGGGKTGRGAVSEKDAPKELLQMLEKQKK.

An N6-methyllysine mark is found at Lys-5, Lys-7, Lys-61, Lys-63, and Lys-64.

It belongs to the 7 kDa DNA-binding/endoribonuclease P2 family. Monomer.

The protein resides in the cytoplasm. Its function is as follows. Can constrain negative DNA supercoils. May be involved in maintaining the integrity of the genome at high temperature. Stimulates the Holliday junction cleavage activity of Hjc. The chain is DNA-binding protein 7d (sso7d) from Saccharolobus solfataricus (strain ATCC 35092 / DSM 1617 / JCM 11322 / P2) (Sulfolobus solfataricus).